Consider the following 286-residue polypeptide: Shikimate dehydrogenase (NADP(+)) (286 aa).

Residues 19–21 (SVS) and Thr66 contribute to the shikimate site. Lys70 serves as the catalytic Proton acceptor. Shikimate-binding residues include Asn91 and Asp106. Residues 130–134 (GAGGS) and Ala225 each bind NADP(+). Tyr227 lines the shikimate pocket. Gly248 is an NADP(+) binding site.

Belongs to the shikimate dehydrogenase family. As to quaternary structure, homodimer.

It carries out the reaction shikimate + NADP(+) = 3-dehydroshikimate + NADPH + H(+). It functions in the pathway metabolic intermediate biosynthesis; chorismate biosynthesis; chorismate from D-erythrose 4-phosphate and phosphoenolpyruvate: step 4/7. In terms of biological role, involved in the biosynthesis of the chorismate, which leads to the biosynthesis of aromatic amino acids. Catalyzes the reversible NADPH linked reduction of 3-dehydroshikimate (DHSA) to yield shikimate (SA). This chain is Shikimate dehydrogenase (NADP(+)), found in Dehalococcoides mccartyi (strain CBDB1).